The following is a 202-amino-acid chain: B-cell CLL/lymphoma 7 protein family member B (202 aa).

The tract at residues Asp53–Ser202 is disordered. Residues Glu90–Asp99 are compositionally biased toward polar residues. Residues Ser107–Pro123 are compositionally biased toward low complexity. 7 positions are modified to phosphoserine: Ser114, Ser118, Ser120, Ser122, Ser127, Ser148, and Ser152.

The protein belongs to the BCL7 family.

Positive regulator of apoptosis. Plays a role in the Wnt signaling pathway, negatively regulating the expression of Wnt signaling components CTNNB1 and HMGA1. Involved in cell cycle progression, maintenance of the nuclear structure and stem cell differentiation. May play a role in lung tumor development or progression. In Mus musculus (Mouse), this protein is B-cell CLL/lymphoma 7 protein family member B (Bcl7b).